We begin with the raw amino-acid sequence, 88 residues long: RNA-binding protein Hfq (88 aa).

In terms of domain architecture, Sm spans 9–68 (DPFLNALRCERIPVSIYLVNGIKLQGQIESFDQFVILLKNTVNQMVYKHAISTVVPARAV). The segment at 66 to 88 (RAVSHHTASDRPQGERPQETTEE) is disordered. Residues 72–88 (TASDRPQGERPQETTEE) are compositionally biased toward basic and acidic residues.

It belongs to the Hfq family. Homohexamer.

Its function is as follows. RNA chaperone that binds small regulatory RNA (sRNAs) and mRNAs to facilitate mRNA translational regulation in response to envelope stress, environmental stress and changes in metabolite concentrations. Also binds with high specificity to tRNAs. This Aliivibrio salmonicida (strain LFI1238) (Vibrio salmonicida (strain LFI1238)) protein is RNA-binding protein Hfq.